A 2472-amino-acid polypeptide reads, in one-letter code: Nuclear receptor corepressor 2 (2472 aa).

3 disordered regions span residues 1-20, 47-168, and 190-220; these read MSGSTQPVAQTWRAAEPRYP, RDYT…SRLS, and ISKLKKKQQQLEEEAAKPPEPEKPVSPPPIE. Arg18 bears the Asymmetric dimethylarginine mark. The segment covering 51-60 has biased composition (polar residues); that stretch reads SHLSPGSIIQ. Phosphoserine is present on residues Ser54 and Ser67. Composition is skewed to basic and acidic residues over residues 78–88 and 96–112; these read RSQELHLRPES and GKPDIEFTESKRPRLEL. Phosphoserine occurs at positions 149 and 152. A coiled-coil region spans residues 165–207; sequence SRLSKEELIQNMDRVDREITMVEQQISKLKKKQQQLEEEAAKP. Residues 203–212 show a composition bias toward basic and acidic residues; that stretch reads EAAKPPEPEK. Ser215 carries the phosphoserine modification. The interaction with SIN3A/B stretch occupies residues 254 to 312; the sequence is LPLYNQPSDTRQYHENIKINQAMRKKLILYFKRRNHARKQWEQRFCQRYDQLMEAWEKK. Residues 389-480 form a deacetylase activation domain (DAD) region; the sequence is MRQLAVIPPM…YLTKKNENYK (92 aa). The SANT 1 domain maps to 427–478; it reads QVTNMWSEQERDTFREKFMQHPKNFGLIASFLERKTVAECVLYYYLTKKNEN. Residues Lys449, Tyr470, and Tyr471 each contribute to the 1D-myo-inositol 1,4,5,6-tetrakisphosphate site. Disordered regions lie at residues 487–618, 665–1107, and 1173–1197; these read YRRR…EMET, HKLK…RPPI, and SATSGSITKGLPSTRAADGPSYRGS. Residues 492–560 are a coiled coil; the sequence is KSQQQQQQQQ…GEDNDEKEAV (69 aa). The residue at position 493 (Ser493) is a Phosphoserine. Residues 494 to 507 are compositionally biased toward low complexity; sequence QQQQQQQQQQQQQQ. Residues 512–548 are compositionally biased toward basic and acidic residues; the sequence is SQEEKEEKEKEKEADKEEEKQDAENEKEELSKEKTDD. Phosphothreonine is present on Thr549. Ser550 is modified (phosphoserine). Residues 592–609 show a composition bias toward polar residues; that stretch reads ATPQQSSELASMEMNESS. The SANT 2 domain occupies 606 to 657; sequence NESSRWTEEEMETAKKGLLEHGRNWSAIARMVGSKTVSQCKNFYFNYKKRQN. A coiled-coil region spans residues 658-682; it reads LDEILQQHKLKMEKERNARRKKKKT. Residues 709–718 are compositionally biased toward acidic residues; that stretch reads NEEELAEEAE. Polar residues predominate over residues 739-750; that stretch reads VNNSSDTESVPS. 2 positions are modified to phosphoserine: Ser747 and Ser750. Composition is skewed to pro residues over residues 773–782 and 789–811; these read TQPPVPPPEE and EPSPVPDASGPPSPEPSPSPAAP. 2 stretches are compositionally biased toward basic and acidic residues: residues 831–850 and 859–868; these read EDAKEQKSEAEEIDVGKPEE and ESVKSDHKEE. Lys878 is modified (N6-acetyllysine). The span at 905 to 919 shows a compositional bias: low complexity; that stretch reads GSSSGATQDSDSSAT. The residue at position 938 (Ser938) is a Phosphoserine. Thr945 bears the Phosphothreonine mark. A Phosphoserine modification is found at Ser955. At Lys958 the chain carries N6-acetyllysine. The span at 978-988 shows a compositional bias: basic and acidic residues; it reads KVHEPPREDTV. Positions 989–1000 are enriched in pro residues; sequence PPKPVPPVPPPT. Residues 1090 to 1101 show a composition bias toward low complexity; the sequence is LPLGLHDSARPV. N6-acetyllysine occurs at positions 1181 and 1209. Ser1220 bears the Phosphoserine mark. 3 disordered regions span residues 1254–1277, 1345–1378, and 1410–1443; these read SVSQCSKEDGRSSSGPPHETAAPK, LKREGTPPPPPPPRDLTETYKPRPLDPLGPLKLK, and PLAPRPLKEGSITQGTPLKYDSGAPSTGTKKHDV. At Thr1350 the chain carries Phosphothreonine. Residues 1359–1368 are compositionally biased toward basic and acidic residues; it reads DLTETYKPRP. Ser1449, Ser1509, and Ser1565 each carry phosphoserine. The tract at residues 1479–1578 is disordered; that stretch reads KSRSGTSSGA…TVPEHHPHPI (100 aa). Asymmetric dimethylarginine is present on Arg1624. Positions 1734–1826 are disordered; that stretch reads TAPPPFSSRH…PISPRTQDAL (93 aa). The span at 1740-1753 shows a compositional bias: low complexity; it reads SSRHSSSPLSPGGP. Phosphoserine is present on residues Ser1746 and Ser1749. Basic and acidic residues predominate over residues 1765-1778; it reads SERERERERERDKS. Residues 1807-1826 are compositionally biased toward polar residues; that stretch reads RPASHTHQHSPISPRTQDAL. Ser1819 is subject to Phosphoserine. Omega-N-methylarginine is present on Arg1854. 3 disordered regions span residues 1857–1878, 1898–1986, and 2001–2078; these read RSTSTSSPVRPAATFPPATHCP, KETS…KPFS, and AGYS…LQTA. The segment covering 1899–1913 has biased composition (basic and acidic residues); sequence ETSRVARPERPRVDA. Lys1920 bears the N6-acetyllysine mark. Residues 1925–1938 show a composition bias toward low complexity; it reads EPASSPSKSSEPRS. At Ser1963 the chain carries Phosphoserine. Lys1983 is modified (N6-acetyllysine). Phosphoserine is present on residues Ser2004, Ser2012, Ser2015, Ser2016, and Ser2018. Thr2020 bears the Phosphothreonine mark. The segment covering 2020–2043 has biased composition (basic and acidic residues); it reads THDKGLSKPLEELEKSHLEGELRH. Ser2035 is subject to Phosphoserine. The span at 2064–2075 shows a compositional bias: low complexity; it reads LPESQPSSSPLL. The segment at 2086–2090 is required for interaction with RARA in the absence of its ligand; that stretch reads RVVTL. Residues 2094-2098 carry the CORNR box of ID1 motif; it reads ISEVI. Positions 2132–2226 are disordered; it reads RRPPSDLYLP…GNTSQPPAFF (95 aa). Residues Ser2161, Ser2181, and Ser2215 each carry the phosphoserine modification. A CORNR box of ID2 motif is present at residues 2296 to 2300; it reads LEAII. A disordered region spans residues 2343-2459; sequence GRSDHALTSP…HHAWDEEPKP (117 aa). The residue at position 2371 (Ser2371) is a Phosphoserine. A compositionally biased stretch (low complexity) spans 2439 to 2450; it reads LAAGSGPLAGPH.

The protein belongs to the N-CoR nuclear receptor corepressors family. As to quaternary structure, forms a large corepressor complex that contains SIN3A/B and histone deacetylases HDAC1 and HDAC2. This complex associates with the thyroid (TR) and the retinoid acid receptors (RAR) in the absence of ligand, and may stabilize their interaction with TFIIB. Interacts directly with RARA in the absence of ligand; the interaction represses RARA activity. Interacts (isoform SMRT) with HDAC10. Interacts with MINT. Component of the N-Cor repressor complex, at least composed of NCOR1, NCOR2, HDAC3, TBL1X, TBL1R, CORO2A and GPS2. Interacts with CBFA2T3 and ATXN1L. Interacts with RARB; the interaction is weak and does not repress RARB transactivational activity. Interacts (via 1D-myo-inositol 1,4,5,6-tetrakisphosphate) with HDAC3; promoting the histone deacetylase activity of HDAC3. Interacts with HDAC7 and C1D. Interacts with NR4A2; this interaction increases in the absence of PITX3. Interacts with BCL6 (via the BTB domain), required for BCL6 transcriptional repressor activity on a subset of target genes. Forms ternary complexes with BCOR and BCL6 on target gene promoters but, on enhancer elements, interacts with BCL6 and HDAC3 to repress proximal gene expression. May interact with DEAF1. Interacts with RXRA. Interacts with MECP2. Interacts with ZBTB7A. Interacts with AR. Interacts with TBL1Y. Interacts with SANBR (via the BTB domain). Ubiquitous. Also widely expressed in early embryos.

It localises to the nucleus. In terms of biological role, transcriptional corepressor that mediates the transcriptional repression activity of some nuclear receptors by promoting chromatin condensation, thus preventing access of the basal transcription. Acts by recruiting chromatin modifiers, such as histone deacetylases HDAC1, HDAC2 and HDAC3. Required to activate the histone deacetylase activity of HDAC3. Involved in the regulation BCL6-dependent of the germinal center (GC) reactions, mainly through the control of the GC B-cells proliferation and survival. Recruited by ZBTB7A to the androgen response elements/ARE on target genes, negatively regulates androgen receptor signaling and androgen-induced cell proliferation. In Mus musculus (Mouse), this protein is Nuclear receptor corepressor 2 (Ncor2).